The following is a 576-amino-acid chain: Arginine--tRNA ligase (576 aa).

The short motif at 122-132 (PNVAKEMHVGH) is the 'HIGH' region element.

Belongs to the class-I aminoacyl-tRNA synthetase family. As to quaternary structure, monomer.

It localises to the cytoplasm. The enzyme catalyses tRNA(Arg) + L-arginine + ATP = L-arginyl-tRNA(Arg) + AMP + diphosphate. The sequence is that of Arginine--tRNA ligase from Photobacterium profundum (strain SS9).